Reading from the N-terminus, the 122-residue chain is UPF0231 protein VSAL_I2591 (122 aa).

It belongs to the UPF0231 family.

The sequence is that of UPF0231 protein VSAL_I2591 from Aliivibrio salmonicida (strain LFI1238) (Vibrio salmonicida (strain LFI1238)).